A 555-amino-acid polypeptide reads, in one-letter code: Urocanate hydratase (555 aa).

Residues 52-53 (GG), Gln130, 176-178 (GMG), Glu196, Arg201, 242-243 (NA), 263-267 (QTSAH), 273-274 (YL), and Tyr322 each bind NAD(+). Cys410 is an active-site residue. Gly492 lines the NAD(+) pocket.

The protein belongs to the urocanase family. NAD(+) is required as a cofactor.

Its subcellular location is the cytoplasm. It carries out the reaction 4-imidazolone-5-propanoate = trans-urocanate + H2O. It functions in the pathway amino-acid degradation; L-histidine degradation into L-glutamate; N-formimidoyl-L-glutamate from L-histidine: step 2/3. Functionally, catalyzes the conversion of urocanate to 4-imidazolone-5-propionate. This is Urocanate hydratase from Shewanella putrefaciens (strain CN-32 / ATCC BAA-453).